We begin with the raw amino-acid sequence, 170 residues long: Peptide deformylase (170 aa).

Cys92 and His134 together coordinate Fe cation. The active site involves Glu135. His138 provides a ligand contact to Fe cation.

It belongs to the polypeptide deformylase family. Requires Fe(2+) as cofactor.

It catalyses the reaction N-terminal N-formyl-L-methionyl-[peptide] + H2O = N-terminal L-methionyl-[peptide] + formate. Functionally, removes the formyl group from the N-terminal Met of newly synthesized proteins. Requires at least a dipeptide for an efficient rate of reaction. N-terminal L-methionine is a prerequisite for activity but the enzyme has broad specificity at other positions. This Chromohalobacter salexigens (strain ATCC BAA-138 / DSM 3043 / CIP 106854 / NCIMB 13768 / 1H11) protein is Peptide deformylase.